A 368-amino-acid polypeptide reads, in one-letter code: MAERCFEAAMTYMIPNKQSVEVFEGLLGILDPVLTSKHVRRVYQEITVSFLMISLISDQVDSKGIVRMSDSQGDDDDSLSSLTWNSKNKLWGFLVNPVPITSSDLEKRLRISCMISSNAYRIGTNVAQVRFLLRIGTFPLVLSRELGFLCPSSSRFPSVIFVSPDKQTEMLRIISSYYSVGDTEEKNCWGILGERYLTTISEDISNLVVMAFPFLQGAFHCSSVYYLNFGCKMAAEGFHAIAREELRIALSNPVLWSDCPLKRVYDSLLQRIPTGVHISHSEEKGDPTFLPLAEYCSSHRECWICGDLKLGVDRGIGADFRHLSERRTSSPDGLDAVMSAVSRMIYHHWSIPSWVSGAFKIAKFIGAH.

This is Protein 5 from Lettuce big-vein associated virus (isolate Japan/Kagawa) (LBVaV).